An 80-amino-acid polypeptide reads, in one-letter code: U-actitoxin-Avd9b (80 aa).

The signal sequence occupies residues 1 to 20 (MNLKVLAVFVLCAILVVVTA). Residues 21–39 (ERRGTETGGYKKDTLQDLK) constitute a propeptide that is removed on maturation. The 36-residue stretch at 45 to 80 (CFDRYREAACTSDNIRLLCKTSAKYQINCKKSCGLC) folds into the ShKT domain. 3 disulfides stabilise this stretch: C45–C80, C54–C73, and C63–C77. The crucial for binding to potassium channels stretch occupies residues 68–69 (KY).

Belongs to the sea anemone type 1 potassium channel toxin family. Type 1b subfamily.

It localises to the secreted. It is found in the nematocyst. In terms of biological role, inhibits voltage-gated potassium channels (Kv1/KCNA). This is U-actitoxin-Avd9b from Anemonia viridis (Snakelocks anemone).